A 177-amino-acid chain; its full sequence is Large ribosomal subunit protein uL6 (177 aa).

This sequence belongs to the universal ribosomal protein uL6 family. In terms of assembly, part of the 50S ribosomal subunit.

This protein binds to the 23S rRNA, and is important in its secondary structure. It is located near the subunit interface in the base of the L7/L12 stalk, and near the tRNA binding site of the peptidyltransferase center. This is Large ribosomal subunit protein uL6 from Pseudomonas fluorescens (strain ATCC BAA-477 / NRRL B-23932 / Pf-5).